A 370-amino-acid polypeptide reads, in one-letter code: UDP-N-acetylglucosamine--N-acetylmuramyl-(pentapeptide) pyrophosphoryl-undecaprenol N-acetylglucosamine transferase (370 aa).

UDP-N-acetyl-alpha-D-glucosamine contacts are provided by residues 15-17, Asn126, Arg169, Ser197, and Gln299; that span reads TGG.

The protein belongs to the glycosyltransferase 28 family. MurG subfamily.

The protein localises to the cell inner membrane. It carries out the reaction di-trans,octa-cis-undecaprenyl diphospho-N-acetyl-alpha-D-muramoyl-L-alanyl-D-glutamyl-meso-2,6-diaminopimeloyl-D-alanyl-D-alanine + UDP-N-acetyl-alpha-D-glucosamine = di-trans,octa-cis-undecaprenyl diphospho-[N-acetyl-alpha-D-glucosaminyl-(1-&gt;4)]-N-acetyl-alpha-D-muramoyl-L-alanyl-D-glutamyl-meso-2,6-diaminopimeloyl-D-alanyl-D-alanine + UDP + H(+). The protein operates within cell wall biogenesis; peptidoglycan biosynthesis. Cell wall formation. Catalyzes the transfer of a GlcNAc subunit on undecaprenyl-pyrophosphoryl-MurNAc-pentapeptide (lipid intermediate I) to form undecaprenyl-pyrophosphoryl-MurNAc-(pentapeptide)GlcNAc (lipid intermediate II). The protein is UDP-N-acetylglucosamine--N-acetylmuramyl-(pentapeptide) pyrophosphoryl-undecaprenol N-acetylglucosamine transferase of Methylorubrum populi (strain ATCC BAA-705 / NCIMB 13946 / BJ001) (Methylobacterium populi).